A 612-amino-acid chain; its full sequence is FAD-linked oxidoreductase notD' (612 aa).

An N-terminal signal peptide occupies residues Met-1 to Gly-19. N-linked (GlcNAc...) asparagine glycans are attached at residues Asn-50, Asn-86, and Asn-109. An FAD-binding PCMH-type domain is found at Gly-124–Ala-307. N-linked (GlcNAc...) asparagine glycans are attached at residues Asn-311 and Asn-396.

This sequence belongs to the oxygen-dependent FAD-linked oxidoreductase family. The cofactor is FAD.

It functions in the pathway alkaloid biosynthesis. Its function is as follows. FAD-linked oxidoreductase; part of the gene cluster that mediates the biosynthesis of notoamide, a fungal indole alkaloid that belongs to a family of natural products containing a characteristic bicyclo[2.2.2]diazaoctane core. The first step of notoamide biosynthesis involves coupling of L-proline and L-tryptophan by the bimodular NRPS notE', to produce cyclo-L-tryptophan-L-proline called brevianamide F. The reverse prenyltransferase notF' then acts as a deoxybrevianamide E synthase and converts brevianamide F to deoxybrevianamide E via reverse prenylation at C-2 of the indole ring leading to the bicyclo[2.2.2]diazaoctane core. Deoxybrevianamide E is further hydroxylated at C-6 of the indole ring, likely catalyzed by the cytochrome P450 monooxygenase notG', to yield 6-hydroxy-deoxybrevianamide E. 6-hydroxy-deoxybrevianamide E is a specific substrate of the prenyltransferase notC' for normal prenylation at C-7 to produce 6-hydroxy-7-prenyl-deoxybrevianamide, also called notoamide S. As the proposed pivotal branching point in notoamide biosynthesis, notoamide S can be diverted to notoamide E through an oxidative pyran ring closure putatively catalyzed by either notH' cytochrome P450 monooxygenase or the notD' FAD-linked oxidoreductase. This step would be followed by an indole 2,3-epoxidation-initiated pinacol-like rearrangement catalyzed by the notB' FAD-dependent monooxygenase leading to the formation of notoamide C and notoamide D. On the other hand notoamide S is converted to notoamide T by notH' (or notD'), a bifunctional oxidase that also functions as the intramolecular Diels-Alderase responsible for generation of (-)-notoamide T. To generate antipodal (+)-notoaminide T, notH (or notD) in Aspergillus strain MF297-2 is expected to catalyze a Diels-Alder reaction leading to the opposite stereochemistry. The remaining oxidoreductase notD' (or notH') likely catalyzes the oxidative pyran ring formation to yield (-)-stephacidin A. The FAD-dependent monooxygenase notI' is highly similar to notB' and is predicted to catalyze a similar conversion from (-)-stephacidin A to (+)-notoamide B via the 2,3-epoxidation of (-)-stephacidin A followed by a pinacol-type rearrangement. Finally, it remains unclear which enzyme could be responsible for the final hydroxylation steps leading to notoamide A and sclerotiamide. The chain is FAD-linked oxidoreductase notD' from Aspergillus versicolor.